A 456-amino-acid polypeptide reads, in one-letter code: tRNA modification GTPase MnmE (456 aa).

(6S)-5-formyl-5,6,7,8-tetrahydrofolate-binding residues include Arg24, Glu81, and Lys120. Residues 216–379 form the TrmE-type G domain; it reads GMTVVIAGRP…LRDHLKACMG (164 aa). Asn226 serves as a coordination point for K(+). GTP-binding positions include 226 to 231, 245 to 251, 270 to 273, and 335 to 338; these read NAGKSS, TDIAGTT, DTAG, and NKAD. Ser230 provides a ligand contact to Mg(2+). Positions 245, 247, and 250 each coordinate K(+). Thr251 contributes to the Mg(2+) binding site. Lys456 contacts (6S)-5-formyl-5,6,7,8-tetrahydrofolate.

Belongs to the TRAFAC class TrmE-Era-EngA-EngB-Septin-like GTPase superfamily. TrmE GTPase family. As to quaternary structure, homodimer. Heterotetramer of two MnmE and two MnmG subunits. K(+) serves as cofactor.

The protein resides in the cytoplasm. Its function is as follows. Exhibits a very high intrinsic GTPase hydrolysis rate. Involved in the addition of a carboxymethylaminomethyl (cmnm) group at the wobble position (U34) of certain tRNAs, forming tRNA-cmnm(5)s(2)U34. This is tRNA modification GTPase MnmE from Pseudomonas fluorescens (strain ATCC BAA-477 / NRRL B-23932 / Pf-5).